The sequence spans 720 residues: Inactive serine protease PAMR1 (720 aa).

The first 21 residues, 1-21, serve as a signal peptide directing secretion; that stretch reads MELGCWTQLGLTFLQLLLISS. 9 disulfides stabilise this stretch: Cys128–Cys150, Cys177–Cys199, Cys239–Cys250, Cys244–Cys260, Cys262–Cys271, Cys280–Cys329, Cys315–Cys342, Cys414–Cys442, and Cys489–Cys505. The region spanning 128-236 is the CUB domain; the sequence is CGQVLRAPKG…DGFHAIYEEI (109 aa). Residues 235–272 enclose the EGF-like domain; the sequence is EITACSSSPCFHDGTCVLDKAGSYKCACLAGYTGQRCE. Sushi domains are found at residues 278 to 344 and 387 to 444; these read RNCS…ICIK and APTK…SCIP. The region spanning 445 to 720 is the Peptidase S1 domain; sequence ICGKIENITA…FKDWIERNMK (276 aa). The N-linked (GlcNAc...) asparagine glycan is linked to Asn614. Intrachain disulfides connect Cys630–Cys649 and Cys661–Cys697.

Belongs to the peptidase S1 family.

It is found in the secreted. May play a role in regeneration of skeletal muscle. This is Inactive serine protease PAMR1 (PAMR1) from Homo sapiens (Human).